The chain runs to 619 residues: Translation initiation factor eIF2B subunit delta (619 aa).

Over residues 21-32 the composition is skewed to basic and acidic residues; sequence GDYLDSKQEGKP. Residues 21–251 are disordered; that stretch reads GDYLDSKQEG…PKQRGKITKK (231 aa). Low complexity predominate over residues 42–56; that stretch reads TNTSPVSIPTIISPP. The segment covering 57–84 has biased composition (polar residues); that stretch reads LGSNNSNYGKSPKSSYDNKQTSPLLSAS. The span at 85-98 shows a compositional bias: low complexity; it reads NNRKNNNNNNNNNN. The segment covering 99-125 has biased composition (polar residues); sequence ATSPKDSSIIGKNNVNSDLSKVSSSLN. Residues 136-199 show a composition bias toward low complexity; that stretch reads STSSTPTSTP…KQQSKQQATQ (64 aa). Over residues 200–244 the composition is skewed to basic and acidic residues; that stretch reads QDKKDKEQQQQQQDKQDKESNEIKGSKEVAKDGQHGVKQFDDPKQ.

It belongs to the eIF-2B alpha/beta/delta subunits family. In terms of assembly, component of the translation initiation factor 2B (eIF2B) complex which is a heterodecamer of two sets of five different subunits: alpha, beta, gamma, delta and epsilon. Subunits alpha, beta and delta comprise a regulatory subcomplex and subunits epsilon and gamma comprise a catalytic subcomplex. Within the complex, the hexameric regulatory complex resides at the center, with the two heterodimeric catalytic subcomplexes bound on opposite sides.

The protein resides in the cytoplasm. It localises to the cytosol. In terms of biological role, acts as a component of the translation initiation factor 2B (eIF2B) complex, which catalyzes the exchange of GDP for GTP on eukaryotic initiation factor 2 (eIF2) gamma subunit. Its guanine nucleotide exchange factor activity is repressed when bound to eIF2 complex phosphorylated on the alpha subunit, thereby limiting the amount of methionyl-initiator methionine tRNA available to the ribosome and consequently global translation is repressed. This Dictyostelium discoideum (Social amoeba) protein is Translation initiation factor eIF2B subunit delta (eif2b4).